A 323-amino-acid chain; its full sequence is Estradiol 17 beta-dehydrogenase 5 (323 aa).

NADP(+) is bound by residues 20–24 and D50; that span reads GFGTY. Y55 functions as the Proton donor in the catalytic mechanism. H117 serves as a coordination point for substrate. Residues 166-167, Q190, 216-221, and 270-280 contribute to the NADP(+) site; these read SN, YSALGS, and KSFSEKRIKEN.

It belongs to the aldo/keto reductase family. In terms of assembly, monomer. Three forms are detected, probably due to post-translational modifications. Mainly found in liver. Also expressed weakly in kidney.

Functionally, active toward androgens, estrogens, and xenobiotic substrates. Also exhibits low 20 alpha-HSD activity. Shows a-stereospecificity in hydrogen transfer between cofactors and substrates (A-specific). Preferentially catalyzes the reduction of 4-androstenedione, 5-alpha-androstane-3,17-dione, androsterone and dehydroepiandrosterone to testosterone, dihydrotestosterone, 5-alpha-androstane-3-alpha,17-beta-diol and 5-androstene-3-beta,17-beta-diol, respectively. The protein is Estradiol 17 beta-dehydrogenase 5 (Akr1c6) of Mus musculus (Mouse).